The sequence spans 118 residues: Large ribosomal subunit protein bL19 (118 aa).

This sequence belongs to the bacterial ribosomal protein bL19 family.

Functionally, this protein is located at the 30S-50S ribosomal subunit interface and may play a role in the structure and function of the aminoacyl-tRNA binding site. This is Large ribosomal subunit protein bL19 from Geotalea daltonii (strain DSM 22248 / JCM 15807 / FRC-32) (Geobacter daltonii).